Here is a 188-residue protein sequence, read N- to C-terminus: Defensin-like protein 99 (188 aa).

A signal peptide spans Met1–Ala28. 7 cysteine pairs are disulfide-bonded: Cys37–Cys95, Cys45–Cys77, Cys58–Cys92, Cys62–Cys94, Cys123–Cys178, Cys137–Cys175, and Cys141–Cys177.

Belongs to the DEFL family.

The protein localises to the secreted. This chain is Defensin-like protein 99, found in Arabidopsis thaliana (Mouse-ear cress).